A 251-amino-acid chain; its full sequence is 5'-nucleotidase SurE (251 aa).

The a divalent metal cation site is built by aspartate 9, aspartate 10, serine 40, and asparagine 94.

It belongs to the SurE nucleotidase family. A divalent metal cation serves as cofactor.

The protein localises to the cytoplasm. The catalysed reaction is a ribonucleoside 5'-phosphate + H2O = a ribonucleoside + phosphate. Its function is as follows. Nucleotidase that shows phosphatase activity on nucleoside 5'-monophosphates. The polypeptide is 5'-nucleotidase SurE (Aquifex aeolicus (strain VF5)).